A 99-amino-acid chain; its full sequence is Aspartyl/glutamyl-tRNA(Asn/Gln) amidotransferase subunit C (99 aa).

It belongs to the GatC family. Heterotrimer of A, B and C subunits.

The enzyme catalyses L-glutamyl-tRNA(Gln) + L-glutamine + ATP + H2O = L-glutaminyl-tRNA(Gln) + L-glutamate + ADP + phosphate + H(+). It carries out the reaction L-aspartyl-tRNA(Asn) + L-glutamine + ATP + H2O = L-asparaginyl-tRNA(Asn) + L-glutamate + ADP + phosphate + 2 H(+). Allows the formation of correctly charged Asn-tRNA(Asn) or Gln-tRNA(Gln) through the transamidation of misacylated Asp-tRNA(Asn) or Glu-tRNA(Gln) in organisms which lack either or both of asparaginyl-tRNA or glutaminyl-tRNA synthetases. The reaction takes place in the presence of glutamine and ATP through an activated phospho-Asp-tRNA(Asn) or phospho-Glu-tRNA(Gln). The chain is Aspartyl/glutamyl-tRNA(Asn/Gln) amidotransferase subunit C from Burkholderia mallei (strain NCTC 10247).